Here is a 228-residue protein sequence, read N- to C-terminus: uncharacterized protein (228 aa).

This is an uncharacterized protein from Rickettsia prowazekii (strain Madrid E).